Consider the following 179-residue polypeptide: Large ribosomal subunit protein uL6 (179 aa).

This sequence belongs to the universal ribosomal protein uL6 family. In terms of assembly, part of the 50S ribosomal subunit.

Its function is as follows. This protein binds to the 23S rRNA, and is important in its secondary structure. It is located near the subunit interface in the base of the L7/L12 stalk, and near the tRNA binding site of the peptidyltransferase center. The chain is Large ribosomal subunit protein uL6 from Alkaliphilus oremlandii (strain OhILAs) (Clostridium oremlandii (strain OhILAs)).